Consider the following 232-residue polypeptide: Pirin-like protein CC_1473 (232 aa).

It belongs to the pirin family.

The polypeptide is Pirin-like protein CC_1473 (Caulobacter vibrioides (strain ATCC 19089 / CIP 103742 / CB 15) (Caulobacter crescentus)).